We begin with the raw amino-acid sequence, 287 residues long: Cysteine-rich repeat secretory protein 58 (287 aa).

The first 20 residues, 1-20, serve as a signal peptide directing secretion; it reads METTKKLFALLCLFVTMNQA. The Extracellular portion of the chain corresponds to 21 to 267; the sequence is ISVSDPDDME…GSFSHRGNNK (247 aa). 2 consecutive Gnk2-homologous domains span residues 28–130 and 135–246; these read DMET…DKFF and ETNP…TYNS. 9 N-linked (GlcNAc...) asparagine glycosylation sites follow: N39, N43, N59, N68, N89, N99, N107, N208, and N245. A helical transmembrane segment spans residues 268–286; sequence LLGGMVLAVSVSVFAFLSL. Position 287 (V287) is a topological domain, cytoplasmic.

It belongs to the cysteine-rich repeat secretory protein family.

The protein resides in the membrane. The polypeptide is Cysteine-rich repeat secretory protein 58 (CRRSP58) (Arabidopsis thaliana (Mouse-ear cress)).